We begin with the raw amino-acid sequence, 472 residues long: Aspartyl/glutamyl-tRNA(Asn/Gln) amidotransferase subunit B (472 aa).

This sequence belongs to the GatB/GatE family. GatB subfamily. Heterotrimer of A, B and C subunits.

The catalysed reaction is L-glutamyl-tRNA(Gln) + L-glutamine + ATP + H2O = L-glutaminyl-tRNA(Gln) + L-glutamate + ADP + phosphate + H(+). It catalyses the reaction L-aspartyl-tRNA(Asn) + L-glutamine + ATP + H2O = L-asparaginyl-tRNA(Asn) + L-glutamate + ADP + phosphate + 2 H(+). Its function is as follows. Allows the formation of correctly charged Asn-tRNA(Asn) or Gln-tRNA(Gln) through the transamidation of misacylated Asp-tRNA(Asn) or Glu-tRNA(Gln) in organisms which lack either or both of asparaginyl-tRNA or glutaminyl-tRNA synthetases. The reaction takes place in the presence of glutamine and ATP through an activated phospho-Asp-tRNA(Asn) or phospho-Glu-tRNA(Gln). This chain is Aspartyl/glutamyl-tRNA(Asn/Gln) amidotransferase subunit B, found in Sulfolobus acidocaldarius (strain ATCC 33909 / DSM 639 / JCM 8929 / NBRC 15157 / NCIMB 11770).